The chain runs to 230 residues: Large ribosomal subunit protein uL1 (230 aa).

The protein belongs to the universal ribosomal protein uL1 family. Part of the 50S ribosomal subunit.

Functionally, binds directly to 23S rRNA. The L1 stalk is quite mobile in the ribosome, and is involved in E site tRNA release. In terms of biological role, protein L1 is also a translational repressor protein, it controls the translation of the L11 operon by binding to its mRNA. This Lactobacillus johnsonii (strain CNCM I-12250 / La1 / NCC 533) protein is Large ribosomal subunit protein uL1.